Reading from the N-terminus, the 172-residue chain is Crossover junction endodeoxyribonuclease RuvC (172 aa).

Catalysis depends on residues D7, E67, and D140. Mg(2+) contacts are provided by D7, E67, and D140.

This sequence belongs to the RuvC family. In terms of assembly, homodimer which binds Holliday junction (HJ) DNA. The HJ becomes 2-fold symmetrical on binding to RuvC with unstacked arms; it has a different conformation from HJ DNA in complex with RuvA. In the full resolvosome a probable DNA-RuvA(4)-RuvB(12)-RuvC(2) complex forms which resolves the HJ. Mg(2+) serves as cofactor.

The protein resides in the cytoplasm. It carries out the reaction Endonucleolytic cleavage at a junction such as a reciprocal single-stranded crossover between two homologous DNA duplexes (Holliday junction).. In terms of biological role, the RuvA-RuvB-RuvC complex processes Holliday junction (HJ) DNA during genetic recombination and DNA repair. Endonuclease that resolves HJ intermediates. Cleaves cruciform DNA by making single-stranded nicks across the HJ at symmetrical positions within the homologous arms, yielding a 5'-phosphate and a 3'-hydroxyl group; requires a central core of homology in the junction. The consensus cleavage sequence is 5'-(A/T)TT(C/G)-3'. Cleavage occurs on the 3'-side of the TT dinucleotide at the point of strand exchange. HJ branch migration catalyzed by RuvA-RuvB allows RuvC to scan DNA until it finds its consensus sequence, where it cleaves and resolves the cruciform DNA. The polypeptide is Crossover junction endodeoxyribonuclease RuvC (Syntrophomonas wolfei subsp. wolfei (strain DSM 2245B / Goettingen)).